Reading from the N-terminus, the 361-residue chain is Cyclic AMP receptor-like protein C (361 aa).

Residues 1–18 (MGIEESQICNPSDREFLS) are Extracellular-facing. A helical transmembrane segment spans residues 19–39 (VDILNIVTSSLSLMGSALTII). Residues 40 to 113 (SYIWKKVRRH…HGTYKQPTSK (74 aa)) lie on the Cytoplasmic side of the membrane. A helical transmembrane segment spans residues 114 to 134 (LPLLIFMLSIADFFTSFFIII). At 135–166 (SQSYLINNSKSYSTPYSPDLKIHFSPCIILRA) the chain is on the extracellular side. The chain crosses the membrane as a helical span at residues 167 to 187 (IIQFFFLSTFFWTTCISYYLF). The Cytoplasmic segment spans residues 188–197 (HQLSSPGEEK). The chain crosses the membrane as a helical span at residues 198–218 (YLLAIFNVVSWGIPFAISMVI). Residues 219-238 (TMTNSIVVNSDGWCEVAKPM) lie on the Extracellular side of the membrane. A helical transmembrane segment spans residues 239–259 (ELSLWFLPLFLCLLVCSIYYF). Residues 260–292 (RLRRLFRSKFEYRLQINDRLKQLDSTISRRLTL) are Cytoplasmic-facing. Residues 293–313 (YIVVFVICWLPDVIQHFISFF) form a helical membrane-spanning segment. The Extracellular segment spans residues 314–318 (SKCTF). Residues 319-339 (FPLLILQNILTPSQGFWNFWI) traverse the membrane as a helical segment. Topologically, residues 340–361 (YSYTNKIARFTPSNDENKRLLQ) are cytoplasmic.

The protein belongs to the G-protein coupled receptor 5 family.

It is found in the membrane. Its function is as follows. Receptor for cAMP. The protein is Cyclic AMP receptor-like protein C (crlC) of Dictyostelium discoideum (Social amoeba).